The sequence spans 506 residues: Xaa-Pro aminopeptidase 3 (506 aa).

The N-terminal 31 residues, 1–31 (MLSLLSTPRLVPVIARLRGLSGCMSCLQRRY), are a transit peptide targeting the mitochondrion. The tract at residues 54 to 79 (HPHLLRPGEVTPGLSQVEYALRRHKL) is interaction with TNFRSF1B. Residues Tyr300, Asp331, Asp342, His423, His430, Glu450, and Glu474 each coordinate substrate. Mn(2+) contacts are provided by Asp331, Asp342, and His423. Glu450 and Glu474 together coordinate Mn(2+).

It belongs to the peptidase M24B family. As to quaternary structure, homodimer. Interacts with TNFRSF1B/TNFR2 (activated) and TRAF2. It depends on Mn(2+) as a cofactor. In terms of tissue distribution, expressed in the kidney, specifically in intercalated cells, but not in principal cells, of the distal convoluted tubule and cortical collecting duct (at protein level).

It localises to the mitochondrion. The protein localises to the cytoplasm. The enzyme catalyses Release of any N-terminal amino acid, including proline, that is linked to proline, even from a dipeptide or tripeptide.. Functionally, catalyzes the removal of a penultimate prolyl residue from the N-termini of peptides, such as Leu-Pro-Ala. Also shows low activity towards peptides with Ala or Ser at the P1 position. Promotes TNFRSF1B-mediated phosphorylation of MAPK8/JNK1 and MAPK9/JNK2, suggesting a function as an adapter protein for TNFRSF1B; the effect is independent of XPNPEP3 peptidase activity. May inhibit apoptotic cell death induced via TNF-TNFRSF1B signaling. The protein is Xaa-Pro aminopeptidase 3 (Xpnpep3) of Rattus norvegicus (Rat).